The following is a 224-amino-acid chain: Adenylate kinase (224 aa).

10–15 (GSGKST) contacts ATP. Positions 30–59 (SSGDMIRAEIEKGSELGKELKKYLAKGELI) are NMP. AMP-binding positions include S31, R36, 57 to 59 (ELI), 83 to 86 (GYPR), and Q90. The tract at residues 124–161 (GRRICPKCGAVYHLRYRPPKVPGKCDLCGSQLIQREDD) is LID. R125 provides a ligand contact to ATP. Zn(2+) is bound by residues C128 and C131. ATP is bound at residue 134-135 (VY). 2 residues coordinate Zn(2+): C148 and C151. AMP contacts are provided by R158 and R169. An ATP-binding site is contributed by G197.

It belongs to the adenylate kinase family. As to quaternary structure, monomer.

The protein resides in the cytoplasm. It carries out the reaction AMP + ATP = 2 ADP. It functions in the pathway purine metabolism; AMP biosynthesis via salvage pathway; AMP from ADP: step 1/1. In terms of biological role, catalyzes the reversible transfer of the terminal phosphate group between ATP and AMP. Plays an important role in cellular energy homeostasis and in adenine nucleotide metabolism. This chain is Adenylate kinase, found in Thermococcus onnurineus (strain NA1).